Consider the following 125-residue polypeptide: Small ribosomal subunit protein uS12c (125 aa).

This sequence belongs to the universal ribosomal protein uS12 family. Part of the 30S ribosomal subunit.

It is found in the plastid. In terms of biological role, with S4 and S5 plays an important role in translational accuracy. Located at the interface of the 30S and 50S subunits. In Euglena longa (Euglenophycean alga), this protein is Small ribosomal subunit protein uS12c (rps12).